Consider the following 339-residue polypeptide: Uracil nucleotide/cysteinyl leukotriene receptor (339 aa).

Residues 1–36 are Extracellular-facing; it reads MDGLETALPSLTDNASLAYSEQCGQETPLENMLFAC. N-linked (GlcNAc...) asparagine glycosylation is present at Asn14. Residues 37–57 form a helical membrane-spanning segment; that stretch reads FYLLDFILAFVGNALALWLFI. At 58-64 the chain is on the cytoplasmic side; the sequence is WDHKSGT. The chain crosses the membrane as a helical span at residues 65 to 85; it reads PANVFLMHLAVADLSCVLVLP. Over 86–105 the chain is Extracellular; the sequence is TRLVYHFSGNHWPFGEIPCR. A disulfide bridge connects residues Cys104 and Cys181. A helical transmembrane segment spans residues 106–126; it reads LTGFLFYLNMYASIYFLTCIS. At 127–147 the chain is on the cytoplasmic side; sequence ADRFLAIVHPVKSLKLRRPLY. Residues 148-168 traverse the membrane as a helical segment; that stretch reads AHLACAFLWIVVAVAMAPLLV. Topologically, residues 169-195 are extracellular; it reads SPQTVQTNHTVVCLQLYREKASHHALA. N-linked (GlcNAc...) asparagine glycosylation is present at Asn176. A helical transmembrane segment spans residues 196-216; sequence SLAVAFTFPFITTVTCYLLII. At 217-232 the chain is on the cytoplasmic side; the sequence is RSLRQGPRIEKHLKNK. The chain crosses the membrane as a helical span at residues 233–253; it reads AVRMIAMVLAIFLICFVPYHI. Topologically, residues 254–280 are extracellular; it reads HRSVYVLHYRGGGTSCSAQRALALGNR. The helical transmembrane segment at 281–301 threads the bilayer; sequence ITSCLTSLNGALDPVMYFFVA. Residues 302-339 are Cytoplasmic-facing; that stretch reads EKFRHALCNLLCSKRLTGPPPSFEGKTNESSLSARSEL.

It belongs to the G-protein coupled receptor 1 family. Expressed in brain, kidney, and heart. Highest level in brain.

The protein localises to the cell membrane. Its function is as follows. Dual specificity receptor for uracil nucleotides and cysteinyl leukotrienes (CysLTs). Signals through G(i) and inhibition of adenylyl cyclase. May mediate brain damage by nucleotides and CysLTs following ischemia. This Rattus norvegicus (Rat) protein is Uracil nucleotide/cysteinyl leukotriene receptor.